We begin with the raw amino-acid sequence, 159 residues long: Protein-export protein SecB (159 aa).

It belongs to the SecB family. In terms of assembly, homotetramer, a dimer of dimers. One homotetramer interacts with 1 SecA dimer.

It is found in the cytoplasm. One of the proteins required for the normal export of preproteins out of the cell cytoplasm. It is a molecular chaperone that binds to a subset of precursor proteins, maintaining them in a translocation-competent state. It also specifically binds to its receptor SecA. This chain is Protein-export protein SecB, found in Nitrobacter winogradskyi (strain ATCC 25391 / DSM 10237 / CIP 104748 / NCIMB 11846 / Nb-255).